Here is a 271-residue protein sequence, read N- to C-terminus: tRNA (guanine-N(1)-)-methyltransferase (271 aa).

S-adenosyl-L-methionine contacts are provided by residues G120 and 145 to 150; that span reads IGDYVL.

This sequence belongs to the RNA methyltransferase TrmD family. As to quaternary structure, homodimer.

The protein localises to the cytoplasm. It carries out the reaction guanosine(37) in tRNA + S-adenosyl-L-methionine = N(1)-methylguanosine(37) in tRNA + S-adenosyl-L-homocysteine + H(+). Functionally, specifically methylates guanosine-37 in various tRNAs. The chain is tRNA (guanine-N(1)-)-methyltransferase from Bifidobacterium longum (strain NCC 2705).